The sequence spans 165 residues: uncharacterized protein (165 aa).

A helical transmembrane segment spans residues 15 to 35 (MSPAIILIGVLILIVLFVIKF). Residues 67 to 119 (ISQLNTLRATLAAKKKELKTLRTARKKECTEQLAKTQAEVDRIQAKIDNFSSR) are a coiled coil. The tract at residues 123–156 (VPLPGGEVGPPYNPPPPRTNTRPNPRPNPRPAQL) is disordered. Positions 133–154 (PYNPPPPRTNTRPNPRPNPRPA) are enriched in pro residues.

It is found in the membrane. This is an uncharacterized protein from Acheta domesticus (House cricket).